Here is a 274-residue protein sequence, read N- to C-terminus: Leucyl/phenylalanyl-tRNA--protein transferase (274 aa).

It belongs to the L/F-transferase family.

It is found in the cytoplasm. The enzyme catalyses N-terminal L-lysyl-[protein] + L-leucyl-tRNA(Leu) = N-terminal L-leucyl-L-lysyl-[protein] + tRNA(Leu) + H(+). The catalysed reaction is N-terminal L-arginyl-[protein] + L-leucyl-tRNA(Leu) = N-terminal L-leucyl-L-arginyl-[protein] + tRNA(Leu) + H(+). It carries out the reaction L-phenylalanyl-tRNA(Phe) + an N-terminal L-alpha-aminoacyl-[protein] = an N-terminal L-phenylalanyl-L-alpha-aminoacyl-[protein] + tRNA(Phe). Its function is as follows. Functions in the N-end rule pathway of protein degradation where it conjugates Leu, Phe and, less efficiently, Met from aminoacyl-tRNAs to the N-termini of proteins containing an N-terminal arginine or lysine. This is Leucyl/phenylalanyl-tRNA--protein transferase from Psychrobacter cryohalolentis (strain ATCC BAA-1226 / DSM 17306 / VKM B-2378 / K5).